The primary structure comprises 231 residues: 2-C-methyl-D-erythritol 4-phosphate cytidylyltransferase (231 aa).

Belongs to the IspD/TarI cytidylyltransferase family. IspD subfamily.

The catalysed reaction is 2-C-methyl-D-erythritol 4-phosphate + CTP + H(+) = 4-CDP-2-C-methyl-D-erythritol + diphosphate. The protein operates within isoprenoid biosynthesis; isopentenyl diphosphate biosynthesis via DXP pathway; isopentenyl diphosphate from 1-deoxy-D-xylulose 5-phosphate: step 2/6. Its function is as follows. Catalyzes the formation of 4-diphosphocytidyl-2-C-methyl-D-erythritol from CTP and 2-C-methyl-D-erythritol 4-phosphate (MEP). This is 2-C-methyl-D-erythritol 4-phosphate cytidylyltransferase from Shewanella piezotolerans (strain WP3 / JCM 13877).